The primary structure comprises 340 residues: Phosphoribosylformylglycinamidine cyclo-ligase (340 aa).

It belongs to the AIR synthase family.

The protein resides in the cytoplasm. It carries out the reaction 2-formamido-N(1)-(5-O-phospho-beta-D-ribosyl)acetamidine + ATP = 5-amino-1-(5-phospho-beta-D-ribosyl)imidazole + ADP + phosphate + H(+). Its pathway is purine metabolism; IMP biosynthesis via de novo pathway; 5-amino-1-(5-phospho-D-ribosyl)imidazole from N(2)-formyl-N(1)-(5-phospho-D-ribosyl)glycinamide: step 2/2. The protein is Phosphoribosylformylglycinamidine cyclo-ligase of Streptococcus pyogenes serotype M18 (strain MGAS8232).